The following is a 170-amino-acid chain: Putative pre-16S rRNA nuclease (170 aa).

The interval 1–29 (MVAASHRSPDRPGDPEGLEPGTGRGRRLG) is disordered.

The protein belongs to the YqgF nuclease family.

The protein localises to the cytoplasm. In terms of biological role, could be a nuclease involved in processing of the 5'-end of pre-16S rRNA. In Mycobacterium ulcerans (strain Agy99), this protein is Putative pre-16S rRNA nuclease.